Reading from the N-terminus, the 349-residue chain is Protein RecA (349 aa).

ATP is bound at residue 65-72 (GPESSGKT).

The protein belongs to the RecA family.

The protein localises to the cytoplasm. Its function is as follows. Can catalyze the hydrolysis of ATP in the presence of single-stranded DNA, the ATP-dependent uptake of single-stranded DNA by duplex DNA, and the ATP-dependent hybridization of homologous single-stranded DNAs. It interacts with LexA causing its activation and leading to its autocatalytic cleavage. This is Protein RecA from Vibrio vulnificus (strain CMCP6).